A 332-amino-acid chain; its full sequence is Adenosine deaminase (332 aa).

2 residues coordinate Zn(2+): His12 and His14. Residues His14, Asp16, and Gly170 each coordinate substrate. His197 provides a ligand contact to Zn(2+). Glu200 (proton donor) is an active-site residue. Asp278 is a binding site for Zn(2+).

This sequence belongs to the metallo-dependent hydrolases superfamily. Adenosine and AMP deaminases family. Adenosine deaminase subfamily. It depends on Zn(2+) as a cofactor.

It carries out the reaction adenosine + H2O + H(+) = inosine + NH4(+). It catalyses the reaction 2'-deoxyadenosine + H2O + H(+) = 2'-deoxyinosine + NH4(+). Catalyzes the hydrolytic deamination of adenosine and 2-deoxyadenosine. The chain is Adenosine deaminase from Clostridium perfringens (strain 13 / Type A).